A 494-amino-acid chain; its full sequence is GlcNAc-binding protein A (494 aa).

A signal peptide spans 1 to 21 (MKLNKIMLAMVVMSISGTAMA). The Chitin-binding type-4 domain maps to 22-192 (HGYIENPPSR…TFYNMIDAEF (171 aa)). The 50-residue stretch at 435–484 (APAWSNKSSYQAKDTVTHNGRIYMSKWWADKASVPGDAAVTDTTGNGSGW) folds into the Chitin-binding type-3 domain. Residues 474 to 494 (VTDTTGNGSGWGKVWEDKGAC) form a disordered region.

This sequence belongs to the GbpA family.

Its subcellular location is the secreted. Functionally, probably interacts with GlcNAc residues. May promote attachment to both epithelial cell surfaces and chitin. This chain is GlcNAc-binding protein A, found in Yersinia enterocolitica serotype O:8 / biotype 1B (strain NCTC 13174 / 8081).